A 345-amino-acid polypeptide reads, in one-letter code: MTNKLTFTRPDDWHLHLRDGKAMQSVLPDTARRFARAMIMPNLKLPVVTTEQAAAYRARILSALPQELVGQFEPLMTLYLTDTTTPEEISRAKASGIVQAVKLYPAGATTHSDAGVTDIDRCKATLAMMEKLDMPLLVHGEVVDPAVDIFDREKIFIDRVLIPLLQRFPGLRVVFEHITTREAVEFVQSISNRIAATITAHHLMLNRNALFTGGLQPHHYCLPVLKREIHRQALVAAATSGHSRFFLGTDSAPHPLKDKESACGCAGIYSAHAAIEFYAEIFEQAGRLDRLEAFASFYGPDFYGLPRNTDQISLSKESWQIPGEVEFGGDRLVPLRAGEQVCWRL.

Residues histidine 14 and histidine 16 each coordinate Zn(2+). Residues 16–18 (HLR) and asparagine 42 each bind substrate. 3 residues coordinate Zn(2+): lysine 102, histidine 139, and histidine 177. The residue at position 102 (lysine 102) is an N6-carboxylysine. Histidine 139 is a binding site for substrate. Leucine 222 is a substrate binding site. Zn(2+) is bound at residue aspartate 250. Aspartate 250 is a catalytic residue. The substrate site is built by histidine 254 and alanine 266.

The protein belongs to the metallo-dependent hydrolases superfamily. DHOase family. Class II DHOase subfamily. In terms of assembly, homodimer. It depends on Zn(2+) as a cofactor.

It catalyses the reaction (S)-dihydroorotate + H2O = N-carbamoyl-L-aspartate + H(+). The protein operates within pyrimidine metabolism; UMP biosynthesis via de novo pathway; (S)-dihydroorotate from bicarbonate: step 3/3. Its function is as follows. Catalyzes the reversible cyclization of carbamoyl aspartate to dihydroorotate. The sequence is that of Dihydroorotase from Nitrosomonas eutropha (strain DSM 101675 / C91 / Nm57).